A 211-amino-acid chain; its full sequence is Beta-crystallin B3 (211 aa).

M1 is subject to N-acetylmethionine. A2 bears the N-acetylalanine; in Beta-crystallin B3, N-terminally processed mark. The tract at residues 2-23 (AEQHGAPEQAAAGKSHGDLGGS) is N-terminal arm. 2 consecutive Beta/gamma crystallin 'Greek key' domains span residues 24-63 (YKVILYELENFQGKRCELSAECPSLTDSLLEKVGSIQVES) and 64-108 (GPWL…RPLN). The tract at residues 109-113 (IDSPH) is connecting peptide. 2 Beta/gamma crystallin 'Greek key' domains span residues 114–155 (HKLH…RAIN) and 156–198 (GTWV…RRIR). The segment at 200–211 (QKWHKRGRFPSS) is C-terminal arm.

It belongs to the beta/gamma-crystallin family. Homo/heterodimer, or complexes of higher-order. The structure of beta-crystallin oligomers seems to be stabilized through interactions between the N-terminal arms.

Crystallins are the dominant structural components of the vertebrate eye lens. The polypeptide is Beta-crystallin B3 (CRYBB3) (Homo sapiens (Human)).